The chain runs to 292 residues: Elongation factor Ts (292 aa).

The interval 81-84 is involved in Mg(2+) ion dislocation from EF-Tu; sequence TDFV.

It belongs to the EF-Ts family.

The protein resides in the cytoplasm. Associates with the EF-Tu.GDP complex and induces the exchange of GDP to GTP. It remains bound to the aminoacyl-tRNA.EF-Tu.GTP complex up to the GTP hydrolysis stage on the ribosome. The protein is Elongation factor Ts of Psychromonas ingrahamii (strain DSM 17664 / CCUG 51855 / 37).